We begin with the raw amino-acid sequence, 122 residues long: Large ribosomal subunit protein uL14c (122 aa).

Belongs to the universal ribosomal protein uL14 family. Part of the 50S ribosomal subunit.

It is found in the plastid. It localises to the chloroplast. Its function is as follows. Binds to 23S rRNA. The sequence is that of Large ribosomal subunit protein uL14c from Daucus carota (Wild carrot).